The primary structure comprises 187 residues: GTP cyclohydrolase 1 (187 aa).

Zn(2+) is bound by residues Cys76, His79, and Cys148.

The protein belongs to the GTP cyclohydrolase I family. As to quaternary structure, homomer.

The catalysed reaction is GTP + H2O = 7,8-dihydroneopterin 3'-triphosphate + formate + H(+). It participates in cofactor biosynthesis; 7,8-dihydroneopterin triphosphate biosynthesis; 7,8-dihydroneopterin triphosphate from GTP: step 1/1. The polypeptide is GTP cyclohydrolase 1 (Streptococcus gordonii (strain Challis / ATCC 35105 / BCRC 15272 / CH1 / DL1 / V288)).